A 504-amino-acid polypeptide reads, in one-letter code: Cystathionine beta-synthase (504 aa).

Cys12 and His23 together coordinate heme. Position 78 is an N6-(pyridoxal phosphate)lysine (Lys78). Residues Asn108, 215–219 (GTGGT), and Ser307 contribute to the pyridoxal 5'-phosphate site. 2 CBS domains span residues 375-434 (LSFD…IVKC) and 442-498 (MVKQ…NGTS).

It belongs to the cysteine synthase/cystathionine beta-synthase family. In terms of assembly, homodimer. Pyridoxal 5'-phosphate serves as cofactor.

The catalysed reaction is L-homocysteine + L-serine = L,L-cystathionine + H2O. It participates in amino-acid biosynthesis; L-cysteine biosynthesis; L-cysteine from L-homocysteine and L-serine: step 1/2. With respect to regulation, has no response to S-adenosyl-methionine/AdoMet, unlike mammalian orthologs. Binds non-covalently to a heme group that may control the redox sensitivity of the enzyme. Hydro-lyase catalyzing the first step of the transsulfuration pathway, where the hydroxyl group of L-serine is displaced by L-homocysteine in a beta-replacement reaction to form L-cystathionine, the precursor of L-cysteine. The polypeptide is Cystathionine beta-synthase (Apis mellifera (Honeybee)).